The following is a 1165-amino-acid chain: Disease resistance protein RPS4B (1165 aa).

Residues Pro-12–Leu-174 enclose the TIR domain. Glu-86 is an active-site residue. The NB-ARC domain maps to Lys-211–Gln-474. An LRR 1 repeat occupies Ser-592 to Pro-613. Residues Leu-614–Asp-635 form an LRR 2; degenerate repeat. LRR repeat units follow at residues Pro-636–Thr-659, Asn-684–Asn-703, Leu-704–Pro-725, Glu-726–Leu-748, Leu-772–Lys-794, and Ser-795–Tyr-818. The stretch at Leu-819–Gln-836 is one LRR 9; degenerate repeat. Residues Val-837–Tyr-863 form an LRR 10 repeat.

It belongs to the disease resistance TIR-NB-LRR family. As to quaternary structure, interacts with RRS1B. RPS4B-RRS1B heterodimer interacts with the bacterial effectors AvrRps4 and PopP2.

Its subcellular location is the nucleus. It catalyses the reaction NAD(+) + H2O = ADP-D-ribose + nicotinamide + H(+). Functionally, disease resistance (R) protein that specifically recognizes the AvrRps4 type III effector avirulence protein from P.syringae. Heterodimerization with RRS1B is required to form a functional complex to recognize AvrRps4 and to mediate the hypersensitive response. This Arabidopsis thaliana (Mouse-ear cress) protein is Disease resistance protein RPS4B.